A 314-amino-acid chain; its full sequence is Methionyl-tRNA formyltransferase (314 aa).

A (6S)-5,6,7,8-tetrahydrofolate-binding site is contributed by 113 to 116 (SLLP).

Belongs to the Fmt family.

The catalysed reaction is L-methionyl-tRNA(fMet) + (6R)-10-formyltetrahydrofolate = N-formyl-L-methionyl-tRNA(fMet) + (6S)-5,6,7,8-tetrahydrofolate + H(+). Its function is as follows. Attaches a formyl group to the free amino group of methionyl-tRNA(fMet). The formyl group appears to play a dual role in the initiator identity of N-formylmethionyl-tRNA by promoting its recognition by IF2 and preventing the misappropriation of this tRNA by the elongation apparatus. The chain is Methionyl-tRNA formyltransferase from Pseudomonas aeruginosa (strain ATCC 15692 / DSM 22644 / CIP 104116 / JCM 14847 / LMG 12228 / 1C / PRS 101 / PAO1).